Consider the following 425-residue polypeptide: tRNA(Ile)-lysidine synthase (425 aa).

Residue 27–32 (SGGLDS) participates in ATP binding.

Belongs to the tRNA(Ile)-lysidine synthase family.

The protein resides in the cytoplasm. It carries out the reaction cytidine(34) in tRNA(Ile2) + L-lysine + ATP = lysidine(34) in tRNA(Ile2) + AMP + diphosphate + H(+). Its function is as follows. Ligates lysine onto the cytidine present at position 34 of the AUA codon-specific tRNA(Ile) that contains the anticodon CAU, in an ATP-dependent manner. Cytidine is converted to lysidine, thus changing the amino acid specificity of the tRNA from methionine to isoleucine. The chain is tRNA(Ile)-lysidine synthase from Streptococcus sanguinis (strain SK36).